Reading from the N-terminus, the 209-residue chain is Uracil phosphoribosyltransferase (209 aa).

5-phospho-alpha-D-ribose 1-diphosphate is bound by residues R79, R104, and 131 to 139 (DPMLATGGS). Residues I194 and 199 to 201 (GDA) each bind uracil. D200 lines the 5-phospho-alpha-D-ribose 1-diphosphate pocket.

The protein belongs to the UPRTase family. Requires Mg(2+) as cofactor.

It catalyses the reaction UMP + diphosphate = 5-phospho-alpha-D-ribose 1-diphosphate + uracil. It participates in pyrimidine metabolism; UMP biosynthesis via salvage pathway; UMP from uracil: step 1/1. With respect to regulation, allosterically activated by GTP. In terms of biological role, catalyzes the conversion of uracil and 5-phospho-alpha-D-ribose 1-diphosphate (PRPP) to UMP and diphosphate. The chain is Uracil phosphoribosyltransferase from Anoxybacillus flavithermus (strain DSM 21510 / WK1).